Here is a 208-residue protein sequence, read N- to C-terminus: Holliday junction resolvase RecU (208 aa).

The interval 1-30 is disordered; sequence MNYPNGKPFNRNKSQVGRTHKGQTSKIDYG. Threonine 87, aspartate 89, glutamate 102, and glutamine 121 together coordinate Mg(2+).

It belongs to the RecU family. Requires Mg(2+) as cofactor.

The protein resides in the cytoplasm. The catalysed reaction is Endonucleolytic cleavage at a junction such as a reciprocal single-stranded crossover between two homologous DNA duplexes (Holliday junction).. Functionally, endonuclease that resolves Holliday junction intermediates in genetic recombination. Cleaves mobile four-strand junctions by introducing symmetrical nicks in paired strands. Promotes annealing of linear ssDNA with homologous dsDNA. Required for DNA repair, homologous recombination and chromosome segregation. In Staphylococcus saprophyticus subsp. saprophyticus (strain ATCC 15305 / DSM 20229 / NCIMB 8711 / NCTC 7292 / S-41), this protein is Holliday junction resolvase RecU.